Consider the following 393-residue polypeptide: tRNA(Met) cytidine acetate ligase (393 aa).

ATP-binding residues include Gly81, Asn142, and Arg167.

It belongs to the TmcAL family.

It localises to the cytoplasm. The enzyme catalyses cytidine(34) in elongator tRNA(Met) + acetate + ATP = N(4)-acetylcytidine(34) in elongator tRNA(Met) + AMP + diphosphate. Functionally, catalyzes the formation of N(4)-acetylcytidine (ac(4)C) at the wobble position of elongator tRNA(Met), using acetate and ATP as substrates. First activates an acetate ion to form acetyladenylate (Ac-AMP) and then transfers the acetyl group to tRNA to form ac(4)C34. This is tRNA(Met) cytidine acetate ligase from Bacillus cereus (strain ATCC 10987 / NRS 248).